The chain runs to 772 residues: uncharacterized protein (772 aa).

2 helical membrane-spanning segments follow: residues 16–36 and 301–321; these read LITF…LFSY and IGWI…LFSW. Residues 670 to 768 enclose the HTH araC/xylS-type domain; it reads DNIIHIIHHE…GITPGNYRQQ (99 aa). 2 DNA-binding regions (H-T-H motif) span residues 687 to 708 and 735 to 758; these read DEIA…KKEM and VKDI…KKLE.

The protein resides in the cell membrane. This is an uncharacterized protein from Bacillus subtilis (strain 168).